We begin with the raw amino-acid sequence, 122 residues long: Large ribosomal subunit protein uL14c (122 aa).

This sequence belongs to the universal ribosomal protein uL14 family. In terms of assembly, part of the 50S ribosomal subunit.

The protein localises to the plastid. It localises to the chloroplast. Functionally, binds to 23S rRNA. The chain is Large ribosomal subunit protein uL14c from Nicotiana sylvestris (Wood tobacco).